Here is a 422-residue protein sequence, read N- to C-terminus: Protein phosphatase methylesterase 1 (422 aa).

Residues 1-27 are disordered; the sequence is MSDMFRKSVLNKLPHLPPTRAPWADES. Residues S207, D234, and H371 contribute to the active site.

It belongs to the AB hydrolase superfamily.

The catalysed reaction is [phosphatase 2A protein]-C-terminal L-leucine methyl ester + H2O = [phosphatase 2A protein]-C-terminal L-leucine + methanol + H(+). Its function is as follows. Demethylates proteins that have been reversibly carboxymethylated. Demethylates the phosphatase PP2A catalytic subunit. The protein is Protein phosphatase methylesterase 1 (PPE1) of Cryptococcus neoformans var. neoformans serotype D (strain B-3501A) (Filobasidiella neoformans).